The sequence spans 586 residues: MFPVKGLSVSADKLKVEPGAIVGTAPAAPAPASAPAVSSSKPSKKRKRHGGDKDVNVDASNLVDLWEKVIEQKKEGVADGVKKHENKRLKKEHEGQGEKLSNSNNDGNQGERKNNKKKNKNKNKNQGEHGIQVAQKKGPKKVEGEEDEDDNNDDADEWEGIDEDEKHASSEKPTPKKDDKKQQQLQQQQQQKKQQKNQEKDNRNGTTSNWQQDKPQPKTATPAPKLTPLQASMREKLISARFRHLNETLYTRPSTEAFKLFEESPEMFTEYHEGFRRQVDVWPENPVDVYIKEIKERAKVRFAPKISGGAEGGKSLPPARFPLPRDQKTKVCTIADLGCGDAKLAKTLVPLKQKLRLEIHSFDLQTGGCELVTRADIANLPLPDNSVDLAIFCLALMGTNWLDFVEEAYRILRWRGELWVAEIKSRFAGSQARVKQPPQKKVVAHSVGKRKKGSALAVAEEEEGDPEQNNLDLAVHVDGDTSKLKKPHETDITAFVEALKRRGFLLNRDFGDNSVDMGNKMFVRMHFVKAAVPTRGKCVPKDGQEDTTKNKKGGQKPKPKFIEEKDEQEEVKDEAAVLKPCVYKIR.

Disordered stretches follow at residues 23–229 and 536–573; these read GTAP…LTPL and GKCVPKDGQEDTTKNKKGGQKPKPKFIEEKDEQEEVKD. The segment covering 25 to 41 has biased composition (low complexity); that stretch reads APAAPAPASAPAVSSSK. The segment covering 65–83 has biased composition (basic and acidic residues); sequence LWEKVIEQKKEGVADGVKK. Residues 99 to 108 show a composition bias toward polar residues; sequence KLSNSNNDGN. Residues 114–123 are compositionally biased toward basic residues; the sequence is NNKKKNKNKN. Positions 144-163 are enriched in acidic residues; sequence GEEDEDDNNDDADEWEGIDE. Residues 164-182 show a composition bias toward basic and acidic residues; sequence DEKHASSEKPTPKKDDKKQ. Positions 183–192 are enriched in low complexity; it reads QQLQQQQQQK. Polar residues predominate over residues 204 to 213; that stretch reads NGTTSNWQQD. Over residues 217–229 the composition is skewed to low complexity; the sequence is PKTATPAPKLTPL. Residues 539–549 show a composition bias toward basic and acidic residues; the sequence is VPKDGQEDTTK. Positions 550-559 are enriched in basic residues; that stretch reads NKKGGQKPKP.

It belongs to the methyltransferase superfamily. RRP8 family.

The protein localises to the nucleus. It is found in the nucleolus. Functionally, S-adenosyl-L-methionine-dependent methyltransferase that specifically methylates the N(1) position of a conserved adenine in helix 25.1 in 25S rRNA. Required both for ribosomal 40S and 60S subunits biogenesis. Required for efficient pre-rRNA cleavage at site A2. This is 25S rRNA (adenine-N(1))-methyltransferase (RPR8) from Chaetomium thermophilum (strain DSM 1495 / CBS 144.50 / IMI 039719) (Thermochaetoides thermophila).